The sequence spans 368 residues: DNA replication and repair protein RecF (368 aa).

An ATP-binding site is contributed by 30–37 (GRNGQGKT).

Belongs to the RecF family.

The protein resides in the cytoplasm. The RecF protein is involved in DNA metabolism; it is required for DNA replication and normal SOS inducibility. RecF binds preferentially to single-stranded, linear DNA. It also seems to bind ATP. This chain is DNA replication and repair protein RecF, found in Trichlorobacter lovleyi (strain ATCC BAA-1151 / DSM 17278 / SZ) (Geobacter lovleyi).